Reading from the N-terminus, the 253-residue chain is 5'/3'-nucleotidase SurE (253 aa).

Residues D8, D9, S39, and N92 each contribute to the a divalent metal cation site.

Belongs to the SurE nucleotidase family. A divalent metal cation is required as a cofactor.

It localises to the cytoplasm. The enzyme catalyses a ribonucleoside 5'-phosphate + H2O = a ribonucleoside + phosphate. The catalysed reaction is a ribonucleoside 3'-phosphate + H2O = a ribonucleoside + phosphate. It catalyses the reaction [phosphate](n) + H2O = [phosphate](n-1) + phosphate + H(+). Its function is as follows. Nucleotidase with a broad substrate specificity as it can dephosphorylate various ribo- and deoxyribonucleoside 5'-monophosphates and ribonucleoside 3'-monophosphates with highest affinity to 3'-AMP. Also hydrolyzes polyphosphate (exopolyphosphatase activity) with the preference for short-chain-length substrates (P20-25). Might be involved in the regulation of dNTP and NTP pools, and in the turnover of 3'-mononucleotides produced by numerous intracellular RNases (T1, T2, and F) during the degradation of various RNAs. The chain is 5'/3'-nucleotidase SurE from Shigella flexneri serotype 5b (strain 8401).